The chain runs to 186 residues: MNTIRNSICLTIITMVLCGFLFPLAITLIGQIFFYQQANGSLITYDNRIVGSKLIGQHWTETRYFHGRPSAVDYNMNPEKLYKNGVSSGGSNESNGNTELIARVKHHVKFDNSNVTIDAATSSGSGLDPHITVENALKQAPRIADARHISTSRVADLIQHRKQRGVLTNDYVNVLELNIALDKMKD.

A helical membrane pass occupies residues 10–30 (LTIITMVLCGFLFPLAITLIG).

This sequence belongs to the KdpC family. The system is composed of three essential subunits: KdpA, KdpB and KdpC.

Its subcellular location is the cell membrane. In terms of biological role, part of the high-affinity ATP-driven potassium transport (or Kdp) system, which catalyzes the hydrolysis of ATP coupled with the electrogenic transport of potassium into the cytoplasm. This subunit acts as a catalytic chaperone that increases the ATP-binding affinity of the ATP-hydrolyzing subunit KdpB by the formation of a transient KdpB/KdpC/ATP ternary complex. The sequence is that of Potassium-transporting ATPase KdpC subunit from Staphylococcus aureus (strain MRSA252).